The chain runs to 62 residues: Sperm histone P2a (62 aa).

The protein belongs to the protamine P2 family. In terms of processing, proteolytic processing into mature chains is required for histone eviction during spermatogenesis. Transition proteins (TNP1 and TNP2) are required for processing. In terms of tissue distribution, testis.

It localises to the nucleus. The protein localises to the chromosome. In terms of biological role, protamines substitute for histones in the chromatin of sperm during the haploid phase of spermatogenesis. They compact sperm DNA into a highly condensed, stable and inactive complex. This Equus caballus (Horse) protein is Sperm histone P2a.